A 94-amino-acid polypeptide reads, in one-letter code: Large ribosomal subunit protein bL27 (94 aa).

Residues 1 to 9 (MLKLNLQFF) constitute a propeptide that is removed on maturation.

The protein belongs to the bacterial ribosomal protein bL27 family. The N-terminus is cleaved by ribosomal processing cysteine protease Prp.

This Staphylococcus haemolyticus (strain JCSC1435) protein is Large ribosomal subunit protein bL27.